The sequence spans 454 residues: Tryptophanase (454 aa).

An N6-(pyridoxal phosphate)lysine modification is found at K256.

Belongs to the beta-eliminating lyase family. Homotetramer. The cofactor is pyridoxal 5'-phosphate.

It catalyses the reaction L-tryptophan + H2O = indole + pyruvate + NH4(+). It functions in the pathway amino-acid degradation; L-tryptophan degradation via pyruvate pathway; indole and pyruvate from L-tryptophan: step 1/1. In Hyphomonas neptunium (strain ATCC 15444), this protein is Tryptophanase.